The following is a 473-amino-acid chain: Presenilin-B (473 aa).

The tract at residues 1-141 (MSSDNNNDPF…PLLNKKEKDD (141 aa)) is disordered. At 1-164 (MSSDNNNDPF…DDEVSLQDFS (164 aa)) the chain is on the cytoplasmic side. Positions 22–46 (RVSTTTSPNRQSINSSPKQSSPKST) are enriched in polar residues. Residues 54–72 (NIILDLNDNNNDNNNTNNY) are compositionally biased toward low complexity. Positions 79–89 (VDNKNKFENKD) are enriched in basic and acidic residues. A helical membrane pass occupies residues 165-185 (SMIVSIIIPVSITMMAVVFFV). Topologically, residues 186–224 (KYLNNQTLYASTLSYTIAGGSSGGGSGADSITGNSFVDS) are lumenal. Asparagine 190 carries N-linked (GlcNAc...) asparagine glycosylation. Residues 225–245 (LIVAGIVLGMIIVTTVAFVLL) traverse the membrane as a helical segment. The Cytoplasmic portion of the chain corresponds to 246–252 (YKYRCLK). The chain crosses the membrane as a helical span at residues 253–273 (ILYGWLFLSVGMMLGSFGTTF). Over 274–286 (FQAMLSAANLPLD) the chain is Lumenal. The helical transmembrane segment at 287–307 (YITFAFLIFNFTVCGIIGVFW) threads the bilayer. Position 308 (tyrosine 308) is a topological domain, cytoplasmic. Residues 309-329 (AHQYVNQLYLVIISVLMAISL) traverse the membrane as a helical segment. Topologically, residues 330–334 (TRLPQ) are lumenal. Residues 335–355 (WTIFTLLVIVAIYDLFAVLCP) traverse the membrane as a helical segment. Aspartate 348 is an active-site residue. Residues 356–389 (RGPLKVLVELSQERNENIPALVYETGKGSDSNLK) are Cytoplasmic-facing. A helical transmembrane segment spans residues 390 to 410 (LGLGDFIFYSLLISRAALVHM). Aspartate 394 is a catalytic residue. The Lumenal portion of the chain corresponds to 411 to 413 (SCV). Residues 414-434 (FSTFIAILTGLFLTLLCLAIF) form a helical membrane-spanning segment. Topologically, residues 435 to 442 (KKALPALP) are cytoplasmic. The short motif at 439-441 (PAL) is the PAL element. Residues 443–463 (ISIFLGILFYYLSNNFLTPFI) constitute an intramembrane region (helical). Residues 464–473 (EALTLSQIFV) are Cytoplasmic-facing.

The protein belongs to the peptidase A22A family. As to quaternary structure, homodimer. Component of the gamma-secretase complex, a complex composed of a presenilin homodimer, nicastrin, aph1 and pen2.

Its subcellular location is the endoplasmic reticulum membrane. It is found in the golgi apparatus membrane. Functionally, probable catalytic subunit of the gamma-secretase complex, an endoprotease complex that catalyzes the intramembrane cleavage of integral membrane proteins such as Notch receptors. Requires the other members of the gamma-secretase complex to have a protease activity. The chain is Presenilin-B (psenB) from Dictyostelium discoideum (Social amoeba).